Here is a 20-residue protein sequence, read N- to C-terminus: Cicerin (20 aa).

Positions 1-20 (ARCENFADSYRQPPISSSQT) are disordered.

Its function is as follows. Has antifungal activity against B.cinerea, F.oxysporum and M.arachidicola. Inhibits cell-free translation in rabbit reticulocyte lysate system. This Cicer arietinum (Chickpea) protein is Cicerin.